We begin with the raw amino-acid sequence, 779 residues long: Tricorn protease-interacting factor F3 (779 aa).

Substrate is bound by residues Glu-102 and 231-235 (GAMEN). Position 266 (His-266) interacts with Zn(2+). Residue Glu-267 is the Proton acceptor of the active site. Positions 270 and 289 each coordinate Zn(2+).

It belongs to the peptidase M1 family. As to quaternary structure, part of the tricorn proteolytic complex. The cofactor is Zn(2+).

The protein localises to the cytoplasm. Its function is as follows. Proteases F1, F2 and F3 degrade oligopeptides produced by Tricorn (themselves probably produced by the proteasome), yielding free amino acids. In Thermoplasma volcanium (strain ATCC 51530 / DSM 4299 / JCM 9571 / NBRC 15438 / GSS1), this protein is Tricorn protease-interacting factor F3 (trf3).